Reading from the N-terminus, the 146-residue chain is Putative pre-16S rRNA nuclease (146 aa).

The protein belongs to the YqgF nuclease family.

The protein resides in the cytoplasm. Its function is as follows. Could be a nuclease involved in processing of the 5'-end of pre-16S rRNA. The sequence is that of Putative pre-16S rRNA nuclease from Burkholderia pseudomallei (strain 668).